The sequence spans 98 residues: C-X-C motif chemokine 10 (98 aa).

A signal peptide spans 1–21; sequence MNQTAILICCLVFLTLSGIQG. Residue Arg-26 is modified to Citrulline. Intrachain disulfides connect Cys-30/Cys-57 and Cys-32/Cys-74.

Belongs to the intercrine alpha (chemokine CxC) family.

The protein resides in the secreted. In terms of biological role, chemotactic for monocytes and T-lymphocytes. Binds to CXCR3. The polypeptide is C-X-C motif chemokine 10 (CXCL10) (Macaca nemestrina (Pig-tailed macaque)).